The following is a 342-amino-acid chain: Endo-1,4-beta-xylanase A (342 aa).

Residues 11 to 342 (EMLNLSLAKT…KEALYRILRF (332 aa)) form the GH10 domain. Residue Glu-144 is the Proton donor of the active site. Residue Glu-252 is the Nucleophile of the active site.

The protein belongs to the glycosyl hydrolase 10 (cellulase F) family. Cytoplasmic xylanase subfamily.

Its subcellular location is the cytoplasm. The enzyme catalyses Endohydrolysis of (1-&gt;4)-beta-D-xylosidic linkages in xylans.. The protein operates within glycan degradation; xylan degradation. The protein is Endo-1,4-beta-xylanase A (xynA) of Caldicellulosiruptor saccharolyticus (Caldocellum saccharolyticum).